A 347-amino-acid polypeptide reads, in one-letter code: MARDGEIERIMETVIKPTKNGITTNLILYGDSGTGKTVTMRYLAREIRDPQVVYVNAIAYRYVKNVLIDFLSKFGIIVPERSSYASLFTRIEGLLRNQGKNVILVIDEAANILKGDYDGLYYLFRSKDSFDVNISTIFVVMEDPAILFDAKIRKSYGIFSEIKFRRYTKGEIYQIVMNRAVQSLTGEGYDEDVLDYIAEVSAEYGSARVGIDILAKAAHIAEYRRSPKISFDDVRAARSMISPFVTESKLASMDYEDLMVLLSICRCLSASRFTDVDCISRNLSVISEQYGKKDINLYDRIKRLENNGIISSSIEGQGRGEGVKKVISIYDIPVSVLTEKIENLLSA.

Residues 34 to 38, Tyr167, and Arg179 each bind ATP; that span reads TGKTV.

It belongs to the CDC6/cdc18 family.

Functionally, involved in regulation of DNA replication. Has no effect on MCM helicase activity, either stimulatory or inhibitory. Does not bind DNA. The protein is Putative ORC1-type DNA replication protein 1 (cdc6-1) of Thermoplasma acidophilum (strain ATCC 25905 / DSM 1728 / JCM 9062 / NBRC 15155 / AMRC-C165).